Consider the following 196-residue polypeptide: GTP cyclohydrolase 1 (196 aa).

Zn(2+) is bound by residues C86, H89, and C158.

This sequence belongs to the GTP cyclohydrolase I family. In terms of assembly, homomer.

The enzyme catalyses GTP + H2O = 7,8-dihydroneopterin 3'-triphosphate + formate + H(+). The protein operates within cofactor biosynthesis; 7,8-dihydroneopterin triphosphate biosynthesis; 7,8-dihydroneopterin triphosphate from GTP: step 1/1. In Clostridium botulinum (strain Kyoto / Type A2), this protein is GTP cyclohydrolase 1.